A 1295-amino-acid polypeptide reads, in one-letter code: DNA-directed RNA polymerase subunit beta' (1295 aa).

Zn(2+) contacts are provided by Cys60, Cys62, Cys75, and Cys78. Mg(2+) is bound by residues Asp516, Asp518, and Asp520. Cys841, Cys914, Cys921, and Cys924 together coordinate Zn(2+).

Belongs to the RNA polymerase beta' chain family. As to quaternary structure, the RNAP catalytic core consists of 2 alpha, 1 beta, 1 beta' and 1 omega subunit. When a sigma factor is associated with the core the holoenzyme is formed, which can initiate transcription. The cofactor is Mg(2+). Requires Zn(2+) as cofactor.

It catalyses the reaction RNA(n) + a ribonucleoside 5'-triphosphate = RNA(n+1) + diphosphate. In terms of biological role, DNA-dependent RNA polymerase catalyzes the transcription of DNA into RNA using the four ribonucleoside triphosphates as substrates. This chain is DNA-directed RNA polymerase subunit beta', found in Dehalococcoides mccartyi (strain ATCC BAA-2266 / KCTC 15142 / 195) (Dehalococcoides ethenogenes (strain 195)).